The primary structure comprises 470 residues: UDP-N-acetylmuramate--L-alanine ligase (470 aa).

118–124 (GTHGKTT) provides a ligand contact to ATP.

Belongs to the MurCDEF family.

The protein resides in the cytoplasm. The enzyme catalyses UDP-N-acetyl-alpha-D-muramate + L-alanine + ATP = UDP-N-acetyl-alpha-D-muramoyl-L-alanine + ADP + phosphate + H(+). Its pathway is cell wall biogenesis; peptidoglycan biosynthesis. In terms of biological role, cell wall formation. The polypeptide is UDP-N-acetylmuramate--L-alanine ligase (Cereibacter sphaeroides (strain ATCC 17025 / ATH 2.4.3) (Rhodobacter sphaeroides)).